The chain runs to 354 residues: Histone-lysine N-methyltransferase SUVR3 (354 aa).

Positions Ser143–Gly188 constitute a Pre-SET domain. 9 residues coordinate Zn(2+): Cys145, Cys147, Cys150, Cys155, Cys157, Cys170, Cys174, Cys176, and Cys180. The 133-residue stretch at Val191–Gly323 folds into the SET domain. S-adenosyl-L-methionine is bound by residues Lys201 to Trp203 and Asn281 to His282. Cys284 lines the Zn(2+) pocket. Residue Tyr322 coordinates S-adenosyl-L-methionine. A Post-SET domain is found at Asp334 to Pro350. Zn(2+)-binding residues include Cys338, Cys340, and Cys345.

This sequence belongs to the class V-like SAM-binding methyltransferase superfamily.

The protein resides in the nucleus. Its subcellular location is the chromosome. The catalysed reaction is L-lysyl-[histone] + S-adenosyl-L-methionine = N(6)-methyl-L-lysyl-[histone] + S-adenosyl-L-homocysteine + H(+). Functionally, histone methyltransferase. The chain is Histone-lysine N-methyltransferase SUVR3 (SUVR3) from Arabidopsis thaliana (Mouse-ear cress).